The chain runs to 275 residues: Phosphate import ATP-binding protein PstB 3 (275 aa).

The segment at 1-26 is disordered; the sequence is MATQETDDSLISTDVQTDATERGDQP. Residues 9–18 are compositionally biased toward polar residues; that stretch reads SLISTDVQTD. The region spanning 31–270 is the ABC transporter domain; the sequence is VETKHLDVHY…PEDDRVEDYI (240 aa). 63–70 contacts ATP; sequence GPSGCGKS.

This sequence belongs to the ABC transporter superfamily. Phosphate importer (TC 3.A.1.7) family. In terms of assembly, the complex is composed of two ATP-binding proteins (PstB), two transmembrane proteins (PstC and PstA) and a solute-binding protein (PstS).

The protein localises to the cell membrane. It carries out the reaction phosphate(out) + ATP + H2O = ADP + 2 phosphate(in) + H(+). In terms of biological role, part of the ABC transporter complex PstSACB involved in phosphate import. Responsible for energy coupling to the transport system. The protein is Phosphate import ATP-binding protein PstB 3 of Natronomonas pharaonis (strain ATCC 35678 / DSM 2160 / CIP 103997 / JCM 8858 / NBRC 14720 / NCIMB 2260 / Gabara) (Halobacterium pharaonis).